Consider the following 444-residue polypeptide: Xylose isomerase (444 aa).

Residues histidine 101 and aspartate 104 contribute to the active site. Mg(2+) is bound by residues glutamate 232, glutamate 268, histidine 271, aspartate 296, aspartate 307, aspartate 309, and aspartate 339.

The protein belongs to the xylose isomerase family. In terms of assembly, homotetramer. The cofactor is Mg(2+).

It is found in the cytoplasm. It carries out the reaction alpha-D-xylose = alpha-D-xylulofuranose. The polypeptide is Xylose isomerase (Thermotoga sp. (strain RQ2)).